The chain runs to 246 residues: UPF0309 protein TTE0306 (246 aa).

The SIS domain maps to 31–212; that stretch reads ITESLISEDS…EAEIITNMLE (182 aa).

It belongs to the UPF0309 family.

This is UPF0309 protein TTE0306 from Caldanaerobacter subterraneus subsp. tengcongensis (strain DSM 15242 / JCM 11007 / NBRC 100824 / MB4) (Thermoanaerobacter tengcongensis).